A 395-amino-acid chain; its full sequence is Acetate kinase (395 aa).

Asparagine 8 provides a ligand contact to Mg(2+). An ATP-binding site is contributed by lysine 15. Arginine 89 contacts substrate. Aspartate 146 acts as the Proton donor/acceptor in catalysis. ATP contacts are provided by residues 206–210 (HLGNG), 281–283 (DLR), and 329–333 (GIGEN). Residue glutamate 382 participates in Mg(2+) binding.

Belongs to the acetokinase family. In terms of assembly, homodimer. Mg(2+) serves as cofactor. The cofactor is Mn(2+).

Its subcellular location is the cytoplasm. It catalyses the reaction acetate + ATP = acetyl phosphate + ADP. It functions in the pathway metabolic intermediate biosynthesis; acetyl-CoA biosynthesis; acetyl-CoA from acetate: step 1/2. Functionally, catalyzes the formation of acetyl phosphate from acetate and ATP. Can also catalyze the reverse reaction. The chain is Acetate kinase from Bacillus velezensis (strain DSM 23117 / BGSC 10A6 / LMG 26770 / FZB42) (Bacillus amyloliquefaciens subsp. plantarum).